The chain runs to 299 residues: Protein sprouty homolog 4 (299 aa).

At Met1 the chain carries N-acetylmethionine. Disordered stretches follow at residues Asn50 to Ala79 and Phe92 to Arg127. Low complexity predominate over residues Phe92–Ser107. The residue at position 125 (Ser125) is a Phosphoserine. One can recognise an SPR domain in the interval Lys166–Cys273.

The protein belongs to the sprouty family. Interacts (via C-terminus) with TESK1 (via both C- and N-termini); the interaction inhibits TESK1 kinase activity. Interacts with RAF1. Interacts with CAV1 (via C-terminus).

Its subcellular location is the cytoplasm. The protein localises to the cell projection. It is found in the ruffle membrane. Functionally, suppresses the insulin receptor and EGFR-transduced MAPK signaling pathway, but does not inhibit MAPK activation by a constitutively active mutant Ras. Probably impairs the formation of GTP-Ras. Inhibits Ras-independent, but not Ras-dependent, activation of RAF1. Represses integrin-mediated cell spreading via inhibition of TESK1-mediated phosphorylation of cofilin. In Bos taurus (Bovine), this protein is Protein sprouty homolog 4 (SPRY4).